Consider the following 148-residue polypeptide: Lysozyme C (148 aa).

The first 18 residues, 1–18 (MKAVIILGLVLLSVTVQG), serve as a signal peptide directing secretion. Positions 19–148 (KIFERCELAR…VSQYVQGCGV (130 aa)) constitute a C-type lysozyme domain. 4 disulfide bridges follow: Cys24–Cys146, Cys48–Cys134, Cys83–Cys99, and Cys95–Cys113. Active-site residues include Glu53 and Asp71.

It belongs to the glycosyl hydrolase 22 family. As to quaternary structure, monomer.

The catalysed reaction is Hydrolysis of (1-&gt;4)-beta-linkages between N-acetylmuramic acid and N-acetyl-D-glucosamine residues in a peptidoglycan and between N-acetyl-D-glucosamine residues in chitodextrins.. Functionally, lysozymes have primarily a bacteriolytic function; those in tissues and body fluids are associated with the monocyte-macrophage system and enhance the activity of immunoagents. This is Lysozyme C (LYZ) from Erythrocebus patas (Red guenon).